Reading from the N-terminus, the 147-residue chain is Hemoglobin subunit epsilon (147 aa).

The region spanning histidine 3 to histidine 147 is the Globin domain. Residues serine 14 and serine 51 each carry the phosphoserine modification. The heme b site is built by histidine 64 and histidine 93.

Belongs to the globin family. Heterotetramer of two alpha chains and two epsilon chains in early embryonic hemoglobin Gower-2; two zeta chains and two epsilon chains in early embryonic hemoglobin Gower-1. As to expression, red blood cells.

In terms of biological role, the epsilon chain is a beta-type chain of early mammalian embryonic hemoglobin. In Bradypus tridactylus (Pale-throated three-toed sloth), this protein is Hemoglobin subunit epsilon (HBE1).